The chain runs to 532 residues: Putative 57 kDa heat shock protein (532 aa).

SHSP domains follow at residues Val25–Thr134 and Ser439–Asn532.

It belongs to the small heat shock protein (HSP20) family.

The chain is Putative 57 kDa heat shock protein from Arabidopsis thaliana (Mouse-ear cress).